A 279-amino-acid polypeptide reads, in one-letter code: Tryptophan synthase alpha chain (279 aa).

Catalysis depends on proton acceptor residues glutamate 50 and aspartate 61.

It belongs to the TrpA family. As to quaternary structure, tetramer of two alpha and two beta chains.

The catalysed reaction is (1S,2R)-1-C-(indol-3-yl)glycerol 3-phosphate + L-serine = D-glyceraldehyde 3-phosphate + L-tryptophan + H2O. Its pathway is amino-acid biosynthesis; L-tryptophan biosynthesis; L-tryptophan from chorismate: step 5/5. Its function is as follows. The alpha subunit is responsible for the aldol cleavage of indoleglycerol phosphate to indole and glyceraldehyde 3-phosphate. The protein is Tryptophan synthase alpha chain of Brucella anthropi (strain ATCC 49188 / DSM 6882 / CCUG 24695 / JCM 21032 / LMG 3331 / NBRC 15819 / NCTC 12168 / Alc 37) (Ochrobactrum anthropi).